The following is a 591-amino-acid chain: Aspartate--tRNA(Asp/Asn) ligase (591 aa).

E175 serves as a coordination point for L-aspartate. An aspartate region spans residues 199–202 (QQFK). L-aspartate is bound by residues R221 and H453. 221-223 (RDE) lines the ATP pocket. E486 provides a ligand contact to ATP. R493 lines the L-aspartate pocket. 538–541 (GIDR) contributes to the ATP binding site.

Belongs to the class-II aminoacyl-tRNA synthetase family. Type 1 subfamily. Homodimer.

The protein localises to the cytoplasm. It catalyses the reaction tRNA(Asx) + L-aspartate + ATP = L-aspartyl-tRNA(Asx) + AMP + diphosphate. Aspartyl-tRNA synthetase with relaxed tRNA specificity since it is able to aspartylate not only its cognate tRNA(Asp) but also tRNA(Asn). Reaction proceeds in two steps: L-aspartate is first activated by ATP to form Asp-AMP and then transferred to the acceptor end of tRNA(Asp/Asn). The sequence is that of Aspartate--tRNA(Asp/Asn) ligase from Cereibacter sphaeroides (strain ATCC 17029 / ATH 2.4.9) (Rhodobacter sphaeroides).